The sequence spans 221 residues: Nucleolar protein 3 (221 aa).

A lipid anchor (N-myristoyl glycine) is attached at Gly2. Positions 4 to 95 (MQERPSETID…MPDPAWDWQH (92 aa)) constitute a CARD domain. Residues 20–70 (VETLQADSGLLLDALVARGVLTGPEYEALDALPDAERRVRRLLLLVQSKGE) form an essential for interaction with BAX region. Residues 107 to 221 (PPCPGHWTPE…GDESEGCENT (115 aa)) form a disordered region. Residues 132 to 143 (EEEEIGGPEDSE) show a composition bias toward acidic residues. Position 149 is a phosphothreonine; by CK2 (Thr149). 2 stretches are compositionally biased toward acidic residues: residues 165–201 (PDLEQEMEPEPEPEVEPEPEPEPEPEPEPEPEPEPEP) and 209–221 (FQEGDESEGCENT).

In terms of assembly, oligomerizes (via CARD doamin). Interacts (via CARD domain) with CASP2; inhibits CASP2 activity in a phosphorylation-dependent manner. Interacts with CASP8; decreases CASP8 activity in a mitochondria localization- and phosphorylation-dependent manner and this interaction is dissociated by calcium. Interacts with TFPT; translocates NOL3 into the nucleus and negatively regulated TFPT-induced cell death. Interacts directly (via CARD domain) with FAS and FADD (via DED domain); inhibits death-inducing signaling complex (DISC) assembly by inhibiting the increase in FAS-FADD binding induced by FAS activation. Interacts (via CARD domain) with BAX (via a C-terminal 33 residues); inhibits BAX activation and translocation and consequently cytochrome c release from mitochondria. Interacts with PPM1G; may dephosphorylate NOL3. Interacts (via CARD domain) with BBC3 (via BH3 domain); preventing the association of BBC3 with BCL2 and resulting in activation of CASP8. Interacts (via CARD domain) with BAD(via BH3 domain); preventing the association of BAD with BCL2. Interacts directly (via CARD domain) with TNFRSF1A; inhibits TNF-signaling pathway. In terms of processing, phosphorylation at Thr-149 is required for its antiapoptotic effect by blocking death-inducing signaling complex (DISC) activity through the control of interaction with CASP8. Phosphorylation at Thr-149 results in translocation to mitochondria and this translocation enables the binding to CASP8. Dephosphorylated at Thr-149 by calcineurin; doesn't inhibit the association between FADD and CASP8 and the consequent apoptosis. Post-translationally, polyubiquitinated by MDM2; promoting proteasomal-dependent degradation in response to apoptotic stimuli. Highly expressed in skeletal muscle, heart and medulla.

The protein resides in the cytoplasm. It is found in the mitochondrion. Its subcellular location is the sarcoplasmic reticulum. It localises to the membrane. Its function is as follows. Apoptosis repressor that blocks multiple modes of cell death. Inhibits extrinsic apoptotic pathways through two different ways. Firstly by interacting with FAS and FADD upon FAS activation blocking death-inducing signaling complex (DISC) assembly. Secondly by interacting with CASP8 in a mitochondria localization- and phosphorylation-dependent manner, limiting the amount of soluble CASP8 available for DISC-mediated activation. Inhibits intrinsic apoptotic pathway in response to a wide range of stresses, through its interaction with BAX resulting in BAX inactivation, preventing mitochondrial dysfunction and release of pro-apoptotic factors. Inhibits calcium-mediated cell death by functioning as a cytosolic calcium buffer, dissociating its interaction with CASP8 and maintaining calcium homeostasis. Negatively regulates oxidative stress-induced apoptosis by phosphorylation-dependent suppression of the mitochondria-mediated intrinsic pathway, by blocking CASP2 activation and BAX translocation. Negatively regulates hypoxia-induced apoptosis in part by inhibiting the release of cytochrome c from mitochondria in a caspase-independent manner. Also inhibits TNF-induced necrosis by preventing TNF-signaling pathway through TNFRSF1A interaction abrogating the recruitment of RIPK1 to complex I. Finally through its role as apoptosis repressor, promotes vascular remodeling through inhibition of apoptosis and stimulation of proliferation, in response to hypoxia. Inhibits too myoblast differentiation through caspase inhibition. This is Nucleolar protein 3 (Nol3) from Rattus norvegicus (Rat).